The following is a 2948-amino-acid chain: Transforming acidic coiled-coil-containing protein 2 (2948 aa).

Positions 1-30 (MGNENSTSDNQRTLSAQTPRSAQPPGNSQN) are enriched in polar residues. Disordered regions lie at residues 1–304 (MGNE…TDDL), 314–333 (RSNS…QESC), 392–453 (AAGG…MPVS), 465–785 (LVGL…PQGE), 825–964 (SSEK…VSPP), 985–1050 (CTGQ…QPDS), 1062–1154 (ALAP…GEAT), 1243–1274 (AAQR…VGEP), 1296–1400 (QPGA…EQIA), 1427–1463 (PGEK…VTLL), 1493–1661 (ASDK…GERR), 1675–1705 (LGNQ…AGEA), 1741–1878 (VLPG…ESPT), 1907–2035 (HAGL…SSGT), and 2052–2460 (LEPR…ETPP). Residues 174–184 (GRERQPKEEGQ) show a composition bias toward basic and acidic residues. Residues Ser-197, Ser-201, and Ser-269 each carry the phosphoserine modification. The residue at position 325 (Val-325) is a Phosphothreonine. Ser-493 is modified (phosphoserine). Residues 496 to 507 (ERGEHLNTEQSH) show a composition bias toward basic and acidic residues. Ser-561, Ser-571, and Ser-575 each carry phosphoserine. Over residues 604–629 (SKRDPEVGKDELSKPSSDAESRDHPS) the composition is skewed to basic and acidic residues. The residue at position 758 (Ser-758) is a Phosphoserine. The span at 911–926 (SDTPTSSPTDMVWESS) shows a compositional bias: low complexity. Ser-962 is modified (phosphoserine). Residues 985 to 996 (CTGQGPNKSQQA) are compositionally biased toward polar residues. A Phosphoserine modification is found at Ser-1025. A phosphoserine mark is found at Ser-1267 and Ser-1313. Residues 1348-1357 (ATAPGAGAKA) are compositionally biased toward low complexity. A compositionally biased stretch (polar residues) spans 1383 to 1400 (DPKQGTSGGVDTSSEQIA). A Phosphoserine modification is found at Ser-1562. Composition is skewed to basic and acidic residues over residues 1801–1823 (DETH…RESP) and 1834–1854 (PKKD…RGAE). The span at 1862 to 1873 (ADDIIQPAAPAD) shows a compositional bias: low complexity. Basic and acidic residues predominate over residues 1939–1948 (PAKDLSRSSD). Positions 1963–1976 (KAPPAPPPPPPEVI) are enriched in pro residues. At Ser-2072 the chain carries Phosphoserine. Polar residues predominate over residues 2074-2102 (DSVPISKSTLSRSLSLQASDFDGASSSGN). Low complexity predominate over residues 2114–2124 (STGSSSASSTL). Basic residues predominate over residues 2125-2141 (KRTKKPRPPSLKKKQTT). A phosphoserine mark is found at Ser-2161 and Ser-2226. Thr-2246 is modified (phosphothreonine). Ser-2256 bears the Phosphoserine mark. Positions 2265–2275 (LEFDYSEDKSS) are enriched in basic and acidic residues. The span at 2288–2305 (KIGKKPVAKMPLRRPKMK) shows a compositional bias: basic residues. An SPAZ domain is found at 2315 to 2403 (PASPPRSPAE…SPASFEIPAS (89 aa)). Phosphoserine is present on residues Ser-2317, Ser-2321, Ser-2359, Ser-2389, Ser-2392, Ser-2394, and Ser-2403. Polar residues predominate over residues 2348–2368 (NPFSSTSKMQESPKLPQQSYN). Low complexity predominate over residues 2382 to 2395 (KTSSKTPSSPSKSP). 4 positions are modified to phosphothreonine: Thr-2430, Thr-2451, Thr-2455, and Thr-2458. Ser-2512 and Ser-2534 each carry phosphoserine. Thr-2553 is modified (phosphothreonine). Residues 2555-2577 (QESPVKSSPVRMSESPTPCSGSS) are disordered. Ser-2557 and Ser-2569 each carry phosphoserine. Residues 2568–2577 (ESPTPCSGSS) are compositionally biased toward polar residues. Thr-2625 carries the phosphothreonine modification. 2 coiled-coil regions span residues 2675–2703 (AQKL…LASR) and 2746–2947 (DLDS…KMGK).

Belongs to the TACC family. Interacts with CCDC100/CEP120. Interacts with microtubules. Interacts with YEATS4, GCN5L2 and PCAF. In terms of processing, phosphorylated by TTK; which is required for localization in centrosome. In terms of tissue distribution, strongly expressed in heart, skeletal muscle, brain, prostate, thyroid and trachea.

The protein resides in the cytoplasm. It localises to the nucleus. Its subcellular location is the cytoskeleton. The protein localises to the microtubule organizing center. It is found in the centrosome. Functionally, plays a role in the microtubule-dependent coupling of the nucleus and the centrosome. Involved in the processes that regulate centrosome-mediated interkinetic nuclear migration (INM) of neural progenitors. May play a role in organizing centrosomal microtubules. May act as a tumor suppressor protein. May represent a tumor progression marker. The protein is Transforming acidic coiled-coil-containing protein 2 (TACC2) of Homo sapiens (Human).